A 131-amino-acid polypeptide reads, in one-letter code: UPF0102 protein YraN (131 aa).

It belongs to the UPF0102 family.

The chain is UPF0102 protein YraN from Salmonella arizonae (strain ATCC BAA-731 / CDC346-86 / RSK2980).